The chain runs to 119 residues: MMKLYSLVIIATLAAAAFAATSEEISAAVGEIISQHQEDLERYAKVVERGEEPKKYIRCSKQLGESCYLNCECCGAAAVCEDYKYICKEKVSDNSVLNALGQAWNAVGNSISRYYCDAE.

An N-terminal signal peptide occupies residues 1-19; sequence MMKLYSLVIIATLAAAAFA. 4 disulfide bridges follow: Cys59-Cys74, Cys67-Cys80, Cys71-Cys116, and Cys73-Cys87.

It belongs to the neurotoxin 25 family. ICK-8 subfamily. Expressed by the venom gland.

It is found in the secreted. Functionally, ion channel inhibitor. This is Toxin ICK-11 from Trittame loki (Brush-footed trapdoor spider).